The following is a 309-amino-acid chain: Ribosomal RNA small subunit methyltransferase H (309 aa).

Residues 33–35 (GGH), aspartate 53, phenylalanine 79, aspartate 100, and glutamine 107 each bind S-adenosyl-L-methionine.

Belongs to the methyltransferase superfamily. RsmH family.

The protein resides in the cytoplasm. It catalyses the reaction cytidine(1402) in 16S rRNA + S-adenosyl-L-methionine = N(4)-methylcytidine(1402) in 16S rRNA + S-adenosyl-L-homocysteine + H(+). Functionally, specifically methylates the N4 position of cytidine in position 1402 (C1402) of 16S rRNA. This is Ribosomal RNA small subunit methyltransferase H from Clostridium botulinum (strain Okra / Type B1).